The chain runs to 175 residues: Large ribosomal subunit protein uL5 (175 aa).

The protein belongs to the universal ribosomal protein uL5 family. Part of the 50S ribosomal subunit; contacts the 5S rRNA and probably tRNA. Forms a bridge to the 30S subunit in the 70S ribosome.

This is one of the proteins that bind and probably mediate the attachment of the 5S RNA into the large ribosomal subunit, where it forms part of the central protuberance. In the 70S ribosome it contacts protein S13 of the 30S subunit (bridge B1b), connecting the 2 subunits; this bridge is implicated in subunit movement. May contact the P site tRNA; the 5S rRNA and some of its associated proteins might help stabilize positioning of ribosome-bound tRNAs. This chain is Large ribosomal subunit protein uL5, found in Halobacterium salinarum (strain ATCC 29341 / DSM 671 / R1).